The primary structure comprises 227 residues: ATP synthase subunit a (227 aa).

6 helical membrane-spanning segments follow: residues 14–34 (LLNIPLVLLALIMPWKLFVSF), 69–89 (WVVLFSSLMLMLMTLNVIGLF), 98–118 (QLSMNLGLAVPLWLGTVVYGF), 137–157 (LLVPVLVVVETLSILMRPLAL), 169–189 (HLLMHLISSAVLGLMELSVML), and 205–223 (IAVALIQGYVFAILVTLYL).

The protein belongs to the ATPase A chain family. F-type ATPases have 2 components, CF(1) - the catalytic core - and CF(0) - the membrane proton channel. CF(1) has five subunits: alpha(3), beta(3), gamma(1), delta(1), epsilon(1). CF(0) has three main subunits: a, b and c.

The protein localises to the mitochondrion inner membrane. Mitochondrial membrane ATP synthase (F(1)F(0) ATP synthase or Complex V) produces ATP from ADP in the presence of a proton gradient across the membrane which is generated by electron transport complexes of the respiratory chain. F-type ATPases consist of two structural domains, F(1) - containing the extramembraneous catalytic core and F(0) - containing the membrane proton channel, linked together by a central stalk and a peripheral stalk. During catalysis, ATP synthesis in the catalytic domain of F(1) is coupled via a rotary mechanism of the central stalk subunits to proton translocation. Key component of the proton channel; it may play a direct role in the translocation of protons across the membrane. This is ATP synthase subunit a (ATP6) from Branchiostoma floridae (Florida lancelet).